The primary structure comprises 105 residues: Phosphoribosyl-ATP pyrophosphatase (105 aa).

Belongs to the PRA-PH family.

It is found in the cytoplasm. It catalyses the reaction 1-(5-phospho-beta-D-ribosyl)-ATP + H2O = 1-(5-phospho-beta-D-ribosyl)-5'-AMP + diphosphate + H(+). It functions in the pathway amino-acid biosynthesis; L-histidine biosynthesis; L-histidine from 5-phospho-alpha-D-ribose 1-diphosphate: step 2/9. This chain is Phosphoribosyl-ATP pyrophosphatase, found in Ruegeria pomeroyi (strain ATCC 700808 / DSM 15171 / DSS-3) (Silicibacter pomeroyi).